The chain runs to 436 residues: Septin-7 (436 aa).

Position 2 is an N-acetylserine (serine 2). Tyrosine 29 is subject to Phosphotyrosine. The region spanning 46–315 is the Septin-type G domain; it reads RGFEFTLMVV…ENYRSRKLAA (270 aa). An interaction with SEPTIN12 region spans residues 46-316; that stretch reads RGFEFTLMVV…NYRSRKLAAV (271 aa). The segment at 56–63 is G1 motif; sequence GESGLGKS. 56 to 63 lines the GTP pocket; that stretch reads GESGLGKS. Position 76 is a phosphoserine (serine 76). GTP-binding positions include threonine 89, glycine 115, and 194–202; that span reads KADTLTPEE. The tract at residues 112–115 is G3 motif; that stretch reads DTPG. The tract at residues 193 to 196 is G4 motif; that stretch reads AKAD. Threonine 227 is modified (phosphothreonine). GTP-binding residues include glycine 249 and arginine 264. Residues 331–436 are a coiled coil; sequence TKSPLAQMEE…EKNKKKGKIF (106 aa). Residue serine 333 is modified to Phosphoserine. Lysine 372 carries the N6-acetyllysine modification. Over residues 377–409 the composition is skewed to basic and acidic residues; sequence ELQRRHEQMKKNLEAQHKELEEKRRQFEEEKAN. A disordered region spans residues 377–436; that stretch reads ELQRRHEQMKKNLEAQHKELEEKRRQFEEEKANWEAQQRILEQQNSSRTLEKNKKKGKIF. Serine 423 carries the phosphoserine modification. The residue at position 425 (threonine 425) is a Phosphothreonine.

This sequence belongs to the TRAFAC class TrmE-Era-EngA-EngB-Septin-like GTPase superfamily. Septin GTPase family. In terms of assembly, septins polymerize into heterooligomeric protein complexes that form filaments, and associate with cellular membranes, actin filaments and microtubules. GTPase activity is required for filament formation. Filaments are assembled from asymmetrical heterotrimers, composed of SEPTIN2, SEPTIN6 and SEPTIN7 that associate head-to-head to form a hexameric unit. Within the trimer, directly interacts with SEPTIN6, while interaction with SEPTIN2 seems indirect. In the absence of SEPTIN6, forms homodimers. Interacts directly with CENPE and links CENPE to septin filaments composed of SEPTIN2, SEPTIN6 and SEPTIN7. Interacts with SEPTIN5. Component of a septin core octameric complex consisting of SEPTIN12, SEPTIN7, SEPTIN6 and SEPTIN2 or SEPTIN4 in the order 12-7-6-2-2-6-7-12 or 12-7-6-4-4-6-7-12 and located in the sperm annulus; the SEPTIN12:SEPTIN7 association is mediated by the respective GTP-binding domains. Interacts with SEPTIN2, SEPTIN7, SEPTIN8, SEPTIN9 and SEPTIN11.

The protein resides in the cytoplasm. It is found in the chromosome. It localises to the centromere. The protein localises to the kinetochore. Its subcellular location is the cytoskeleton. The protein resides in the spindle. It is found in the cleavage furrow. It localises to the midbody. The protein localises to the cilium axoneme. Its subcellular location is the cell projection. The protein resides in the cilium. It is found in the flagellum. Functionally, filament-forming cytoskeletal GTPase. Required for normal organization of the actin cytoskeleton. Required for normal progress through mitosis. Involved in cytokinesis. Required for normal association of CENPE with the kinetochore. Plays a role in ciliogenesis and collective cell movements. Forms a filamentous structure with SEPTIN12, SEPTIN6, SEPTIN2 and probably SEPTIN4 at the sperm annulus which is required for the structural integrity and motility of the sperm tail during postmeiotic differentiation. The chain is Septin-7 from Rattus norvegicus (Rat).